A 357-amino-acid polypeptide reads, in one-letter code: D-alanine--D-alanine ligase A (357 aa).

In terms of domain architecture, ATP-grasp spans 143–348 (KRLLREAGLA…YSKVIDVLIE (206 aa)). 171 to 226 (AGALGLPFFAKPARQGSSFGVSKVHDRDGFEQAVETALRYDSKALIEEFVDGREIE) contacts ATP. The Mg(2+) site is built by Asp-302, Glu-315, and Asn-317.

It belongs to the D-alanine--D-alanine ligase family. Mg(2+) is required as a cofactor. Mn(2+) serves as cofactor.

The protein resides in the cytoplasm. It carries out the reaction 2 D-alanine + ATP = D-alanyl-D-alanine + ADP + phosphate + H(+). The protein operates within cell wall biogenesis; peptidoglycan biosynthesis. Cell wall formation. The chain is D-alanine--D-alanine ligase A from Mesorhizobium japonicum (strain LMG 29417 / CECT 9101 / MAFF 303099) (Mesorhizobium loti (strain MAFF 303099)).